The following is a 150-amino-acid chain: 3-hydroxyacyl-[acyl-carrier-protein] dehydratase FabZ (150 aa).

The active site involves histidine 57.

Belongs to the thioester dehydratase family. FabZ subfamily.

The protein resides in the cytoplasm. The enzyme catalyses a (3R)-hydroxyacyl-[ACP] = a (2E)-enoyl-[ACP] + H2O. Its function is as follows. Involved in unsaturated fatty acids biosynthesis. Catalyzes the dehydration of short chain beta-hydroxyacyl-ACPs and long chain saturated and unsaturated beta-hydroxyacyl-ACPs. This is 3-hydroxyacyl-[acyl-carrier-protein] dehydratase FabZ from Mannheimia succiniciproducens (strain KCTC 0769BP / MBEL55E).